The primary structure comprises 402 residues: Adenylyltransferase and sulfurtransferase MOCS3 (402 aa).

ATP is bound by residues glycine 47, aspartate 68, 75–79 (DNLHR), lysine 92, and 136–137 (DN). Zn(2+)-binding residues include cysteine 178 and cysteine 181. The active-site Glycyl thioester intermediate; for adenylyltransferase activity is cysteine 195. 2 residues coordinate Zn(2+): cysteine 253 and cysteine 256. One can recognise a Rhodanese domain in the interval 303-400 (AARKQFLLDT…WALKINDEFP (98 aa)). The active-site Cysteine persulfide intermediate; for sulfurtransferase activity is the cysteine 359.

In the N-terminal section; belongs to the HesA/MoeB/ThiF family. UBA4 subfamily. Zn(2+) serves as cofactor.

It is found in the cytoplasm. Its subcellular location is the cytosol. The catalysed reaction is [molybdopterin-synthase sulfur-carrier protein]-C-terminal Gly-Gly + ATP + H(+) = [molybdopterin-synthase sulfur-carrier protein]-C-terminal Gly-Gly-AMP + diphosphate. It carries out the reaction [molybdopterin-synthase sulfur-carrier protein]-C-terminal Gly-Gly-AMP + S-sulfanyl-L-cysteinyl-[cysteine desulfurase] + AH2 = [molybdopterin-synthase sulfur-carrier protein]-C-terminal-Gly-aminoethanethioate + L-cysteinyl-[cysteine desulfurase] + A + AMP + 2 H(+). The protein operates within tRNA modification; 5-methoxycarbonylmethyl-2-thiouridine-tRNA biosynthesis. Its pathway is cofactor biosynthesis; molybdopterin biosynthesis. Plays a central role in 2-thiolation of mcm(5)S(2)U at tRNA wobble positions of cytosolic tRNA(Lys), tRNA(Glu) and tRNA(Gln). Also essential during biosynthesis of the molybdenum cofactor. Acts by mediating the C-terminal thiocarboxylation of sulfur carriers URM1 and MOCS2A. Its N-terminus first activates URM1 and MOCS2A as acyl-adenylates (-COAMP), then the persulfide sulfur on the catalytic cysteine is transferred to URM1 and MOCS2A to form thiocarboxylation (-COSH) of their C-terminus. The reaction probably involves hydrogen sulfide that is generated from the persulfide intermediate and that acts as a nucleophile towards URM1 and MOCS2A. Subsequently, a transient disulfide bond is formed. Does not use thiosulfate as sulfur donor; NFS1 probably acting as a sulfur donor for thiocarboxylation reactions. This is Adenylyltransferase and sulfurtransferase MOCS3 from Caenorhabditis briggsae.